The primary structure comprises 141 residues: Putative antiporter subunit mnhB2 (141 aa).

4 consecutive transmembrane segments (helical) span residues 10 to 30 (SVTKIVVFILLTFGFYVFFAG), 35 to 55 (GGGFIGGLIFSSAFILMFLAF), 70 to 90 (KLMIIGSLISVATASVPMFFG), and 116 to 136 (LFELGILLTVVGVIVTVMLSI).

It belongs to the CPA3 antiporters (TC 2.A.63) subunit B family. In terms of assembly, may form a heterooligomeric complex that consists of seven subunits: mnhA2, mnhB2, mnhC2, mnhD2, mnhE2, mnhF2 and mnhG2.

The protein localises to the cell membrane. This chain is Putative antiporter subunit mnhB2 (mnhB2), found in Staphylococcus epidermidis (strain ATCC 35984 / DSM 28319 / BCRC 17069 / CCUG 31568 / BM 3577 / RP62A).